The sequence spans 583 residues: Eukaryotic translation initiation factor 3 subunit D (583 aa).

The tract at residues G116–G150 is disordered. The span at Q140–G149 shows a compositional bias: basic and acidic residues. Positions S298 to P312 are RNA gate. The tract at residues N561 to E583 is disordered. A compositionally biased stretch (acidic residues) spans F563–E583.

The protein belongs to the eIF-3 subunit D family. As to quaternary structure, component of the eukaryotic translation initiation factor 3 (eIF-3) complex.

It localises to the cytoplasm. In terms of biological role, mRNA cap-binding component of the eukaryotic translation initiation factor 3 (eIF-3) complex, which is involved in protein synthesis of a specialized repertoire of mRNAs and, together with other initiation factors, stimulates binding of mRNA and methionyl-tRNAi to the 40S ribosome. The eIF-3 complex specifically targets and initiates translation of a subset of mRNAs involved in cell proliferation. In the eIF-3 complex, eif3d specifically recognizes and binds the 7-methylguanosine cap of a subset of mRNAs. This chain is Eukaryotic translation initiation factor 3 subunit D, found in Aspergillus oryzae (strain ATCC 42149 / RIB 40) (Yellow koji mold).